The following is a 449-amino-acid chain: Guanine nucleotide-binding protein alpha-2 subunit (449 aa).

A disordered region spans residues 1-91 (MGLCASSEKN…TATANTSGSQ (91 aa)). Gly-2 carries N-myristoyl glycine lipidation. Cys-4 carries the S-palmitoyl cysteine lipid modification. Composition is skewed to polar residues over residues 7–23 (SEKN…SAGS) and 38–48 (QKTVRTVNTAN). Low complexity predominate over residues 49–59 (QQEKQQQRQQQ). Residues 72–91 (NGSINNAISPTATANTSGSQ) are compositionally biased toward polar residues. The region spanning 122–448 (KELKVLLLGA…ENTLKDSGVL (327 aa)) is the G-alpha domain. The interval 125-138 (KVLLLGAGESGKST) is G1 motif. GTP-binding residues include Glu-133, Ser-134, Gly-135, Lys-136, Ser-137, Thr-138, Asp-245, Leu-270, Thr-276, Gly-299, Asn-365, Lys-366, Asp-368, and Ala-420. Ser-137 provides a ligand contact to Mg(2+). Residues 268 to 276 (DILRSRQMT) form a G2 motif region. Thr-276 contacts Mg(2+). The interval 292–301 (MHIYDVGGQR) is G3 motif. The segment at 361–368 (VLFLNKID) is G4 motif. The segment at 418–423 (TQATDT) is G5 motif.

This sequence belongs to the G-alpha family. G(q) subfamily. G proteins are composed of 3 units; alpha, beta and gamma. The alpha chain contains the guanine nucleotide binding site. GPA2 interacts with the kelch repeat beta-mimic proteins GPB1 and GPB2 and with the gamma subunit GPG1. Interacts with the G protein coupled receptor GPR1. Also interacts with regulators of G protein signaling (RGS) protein RGS2. Requires Mg(2+) as cofactor. Myristoylation at Gly-2 and palmitoylation at Cys-4 are required for membrane localization and function of the protein.

It is found in the cell membrane. Its activity is regulated as follows. Alternates between an inactive form bound to GDP and an active form bound to GTP. Activated by the G protein coupled receptor (GPCR) GPR1, which serves as a guanine nucleotide-exchange factor (GEF), and inactivated by RGS2, acting as a GTPase-activating protein (GAP) for GPA2. Functionally, alpha subunit of the heterotrimeric guanine nucleotide-binding protein (G protein) involved in glucose-induced cAMP signaling. Binds to its cognate transmembrane receptor GPR1, which senses extracellular carbon sources, and activates cAMP-PKA signaling and governs diploid pseudohyphal differentiation and haploid invasive growth. The G protein beta-mimic proteins GPB1 and GPB2 inhibit GPA2-GPR1 coupling, probably to reduce signaling in the absence of glucose. This Saccharomyces cerevisiae (strain ATCC 204508 / S288c) (Baker's yeast) protein is Guanine nucleotide-binding protein alpha-2 subunit (GPA2).